A 221-amino-acid chain; its full sequence is Interleukin-12 subunit alpha (221 aa).

Residues 1–25 (MCPLRSLLLLSTLVLLHHLPHLSLG) form the signal peptide. Disulfide bonds link C39/C112, C66/C198, and C87/C125. 2 N-linked (GlcNAc...) asparagine glycosylation sites follow: N41 and N95.

Belongs to the IL-6 superfamily. As to quaternary structure, heterodimer with IL12B; disulfide-linked. This heterodimer is known as interleukin IL-12. Heterodimer with EBI3/IL27B; not disulfide-linked. This heterodimer is known as interleukin IL-35. Interacts with NBR1; this interaction promotes IL-12 secretion.

The protein localises to the secreted. Its function is as follows. Heterodimerizes with IL12B to form the IL-12 cytokine or with EBI3/IL27B to form the IL-35 cytokine. IL-12 is primarily produced by professional antigen-presenting cells (APCs) such as B-cells and dendritic cells (DCs) as well as macrophages and granulocytes and regulates T-cell and natural killer-cell responses, induces the production of interferon-gamma (IFN-gamma), favors the differentiation of T-helper 1 (Th1) cells and is an important link between innate resistance and adaptive immunity. Mechanistically, exerts its biological effects through a receptor composed of IL12R1 and IL12R2 subunits. Binding to the receptor results in the rapid tyrosine phosphorylation of a number of cellular substrates including the JAK family kinases TYK2 and JAK2. In turn, recruited STAT4 gets phosphorylated and translocates to the nucleus where it regulates cytokine/growth factor responsive genes. As part of IL-35, plays essential roles in maintaining the immune homeostasis of the liver microenvironment and also functions as an immune-suppressive cytokine. Mediates biological events through unconventional receptors composed of IL12RB2 and gp130/IL6ST heterodimers or homodimers. Signaling requires the transcription factors STAT1 and STAT4, which form a unique heterodimer that binds to distinct DNA sites. The polypeptide is Interleukin-12 subunit alpha (IL12A) (Cervus elaphus (Red deer)).